A 57-amino-acid polypeptide reads, in one-letter code: Large ribosomal subunit protein uL30 (57 aa).

Belongs to the universal ribosomal protein uL30 family. In terms of assembly, part of the 50S ribosomal subunit.

The sequence is that of Large ribosomal subunit protein uL30 from Maridesulfovibrio salexigens (strain ATCC 14822 / DSM 2638 / NCIMB 8403 / VKM B-1763) (Desulfovibrio salexigens).